Consider the following 103-residue polypeptide: DNA-directed RNA polymerase subunit omega (103 aa).

The protein belongs to the RNA polymerase subunit omega family. In terms of assembly, the RNAP catalytic core consists of 2 alpha, 1 beta, 1 beta' and 1 omega subunit. When a sigma factor is associated with the core the holoenzyme is formed, which can initiate transcription.

It catalyses the reaction RNA(n) + a ribonucleoside 5'-triphosphate = RNA(n+1) + diphosphate. Its function is as follows. Promotes RNA polymerase assembly. Latches the N- and C-terminal regions of the beta' subunit thereby facilitating its interaction with the beta and alpha subunits. This chain is DNA-directed RNA polymerase subunit omega, found in Streptococcus agalactiae serotype III (strain NEM316).